Consider the following 335-residue polypeptide: Beta-hexosaminidase (335 aa).

Residues aspartate 60, arginine 68, arginine 133, and 163–164 (KH) each bind substrate. Histidine 176 serves as the catalytic Proton donor/acceptor. Residue aspartate 247 is the Nucleophile of the active site.

This sequence belongs to the glycosyl hydrolase 3 family. NagZ subfamily.

Its subcellular location is the cytoplasm. The catalysed reaction is Hydrolysis of terminal non-reducing N-acetyl-D-hexosamine residues in N-acetyl-beta-D-hexosaminides.. It participates in cell wall biogenesis; peptidoglycan recycling. In terms of biological role, plays a role in peptidoglycan recycling by cleaving the terminal beta-1,4-linked N-acetylglucosamine (GlcNAc) from peptide-linked peptidoglycan fragments, giving rise to free GlcNAc, anhydro-N-acetylmuramic acid and anhydro-N-acetylmuramic acid-linked peptides. In Xylella fastidiosa (strain M12), this protein is Beta-hexosaminidase.